A 389-amino-acid chain; its full sequence is Na(+)/H(+) antiporter NhaA (389 aa).

11 consecutive transmembrane segments (helical) span residues 14–34 (AGGI…NSPL), 59–79 (LILW…GLEV), 95–115 (SLPT…YLLF), 124–144 (AGWA…MALL), 154–174 (VFLL…IALF), 177–197 (TDLS…LVGL), 213–233 (LILW…GVII), 257–277 (PWST…VYVG), 292–312 (IALG…YIAV), 328–348 (IAPV…IASL), and 363–383 (LGTL…LSKV).

The protein belongs to the NhaA Na(+)/H(+) (TC 2.A.33) antiporter family.

Its subcellular location is the cell inner membrane. The enzyme catalyses Na(+)(in) + 2 H(+)(out) = Na(+)(out) + 2 H(+)(in). Functionally, na(+)/H(+) antiporter that extrudes sodium in exchange for external protons. This Shewanella baltica (strain OS223) protein is Na(+)/H(+) antiporter NhaA.